The sequence spans 256 residues: Protein YIPF5 (256 aa).

The Cytoplasmic portion of the chain corresponds to 1 to 125 (MSNFDNFNTD…ADGSIMNETD (125 aa)). Residues 126–146 (LAGPMVFCLAFGATLLLAGKI) form a helical membrane-spanning segment. Residue glutamine 147 is a topological domain, lumenal. Residues 148 to 168 (FGYVYGISAMGCLGMYCLLNL) form a helical membrane-spanning segment. The Cytoplasmic segment spans residues 169-172 (MSMT). Residues 173-193 (GVSFGCVSSVLGYCLLPMIIL) traverse the membrane as a helical segment. Residues 194 to 195 (ST) are Lumenal-facing. The chain crosses the membrane as a helical span at residues 196-216 (FAVIFSLQGILGIVLAALIIG). The Cytoplasmic portion of the chain corresponds to 217-235 (WCSFSASKIFISALAMDGQ). Residues 236–256 (QLLVAYPCALLYGVFALISVF) form a helical membrane-spanning segment.

The protein belongs to the YIP1 family.

It localises to the endoplasmic reticulum membrane. The protein resides in the golgi apparatus. The protein localises to the cis-Golgi network membrane. In terms of biological role, plays a role in transport between endoplasmic reticulum and Golgi. The protein is Protein YIPF5 (yipf5) of Xenopus laevis (African clawed frog).